The primary structure comprises 53 residues: Large ribosomal subunit protein bL33 (53 aa).

Belongs to the bacterial ribosomal protein bL33 family.

In Blochmanniella floridana, this protein is Large ribosomal subunit protein bL33.